The primary structure comprises 81 residues: Cell division protein ZapB (81 aa).

Residues glutamate 6 to glutamate 80 are a coiled coil. Over residues serine 38–glutamine 47 the composition is skewed to polar residues. Residues serine 38–tryptophan 67 form a disordered region. Over residues histidine 48–glutamate 62 the composition is skewed to basic and acidic residues.

It belongs to the ZapB family. Homodimer. The ends of the coiled-coil dimer bind to each other, forming polymers. Interacts with FtsZ.

The protein localises to the cytoplasm. Non-essential, abundant cell division factor that is required for proper Z-ring formation. It is recruited early to the divisome by direct interaction with FtsZ, stimulating Z-ring assembly and thereby promoting cell division earlier in the cell cycle. Its recruitment to the Z-ring requires functional FtsA or ZipA. The chain is Cell division protein ZapB from Citrobacter koseri (strain ATCC BAA-895 / CDC 4225-83 / SGSC4696).